The following is a 443-amino-acid chain: MLPVIAIVGRPNVGKSTLFNYLTKSRAALVADVPGVTRDRQYGETTIDSQRLLLVDTGGLVDTENKEVAPLAETQVEQAIDESDCILFLVDAKAGLVPADEIIAERLHKKGKKIFLAVNKADRARAAVVQSDFYKLGFGEPYVIAAASGRGVKDLMTQVLENLPEEKEVIEKEVGIKIAMIGRPNVGKSTLINRLLGEERVIVYDQPGTTRDSIYIPFARNDENYTLIDTAGIRRRAKIQDYVEKFSMIKSLQAMHAADVVIFLLDARQGVTEQDLRLLNRIVEAGVSLIIAVNKWDGLNIEERDNVRNAIDRRMPFVDFARRYFISALHGTGVGKLFRAIQESYQSIQQELTTGQLTRALEKAVAEHEPPLVKGRRIRLRYAHLGARHPLTIVVHGKKTKSLPQSYSRYLANYFRKTFNFIGVPVHIKLKTDPNPYEGQEER.

EngA-type G domains are found at residues 3-167 (PVIA…PEEK) and 176-349 (IKIA…QSIQ). GTP is bound by residues 9-16 (GRPNVGKS), 56-60 (DTGGL), 119-122 (NKAD), 182-189 (GRPNVGKS), 229-233 (DTAGI), and 294-297 (NKWD). The 85-residue stretch at 350-434 (QELTTGQLTR…PVHIKLKTDP (85 aa)) folds into the KH-like domain.

It belongs to the TRAFAC class TrmE-Era-EngA-EngB-Septin-like GTPase superfamily. EngA (Der) GTPase family. Associates with the 50S ribosomal subunit.

In terms of biological role, GTPase that plays an essential role in the late steps of ribosome biogenesis. The sequence is that of GTPase Der from Coxiella burnetii (strain CbuG_Q212) (Coxiella burnetii (strain Q212)).